The primary structure comprises 299 residues: Ribosomal protein uL3 glutamine methyltransferase (299 aa).

The protein belongs to the protein N5-glutamine methyltransferase family. PrmB subfamily.

The enzyme catalyses L-glutaminyl-[ribosomal protein uL3] + S-adenosyl-L-methionine = N(5)-methyl-L-glutaminyl-[ribosomal protein uL3] + S-adenosyl-L-homocysteine + H(+). Functionally, methylates large ribosomal subunit protein uL3 on a specific glutamine residue. The chain is Ribosomal protein uL3 glutamine methyltransferase from Neisseria gonorrhoeae (strain ATCC 700825 / FA 1090).